The chain runs to 314 residues: Mitotic checkpoint protein BUB3.3 (314 aa).

WD repeat units lie at residues 11-50 (PIEDAVSRLRFSPQSNNLLVASWDSYLRLYDVESSSLSLE), 52-90 (NSQAALLDCCFENESTSFTSGSDGFIRRYDLNAGTVDTI), 92-131 (RHDDISTSIVYSYEKGEVISTGFDEKIKFWDTRQRESLVF), 134-173 (DAGGAVGCVTVSGNNLVVCVDASMHIYDLRNLDEAFQSYA), 176-215 (VEVPIRCITSVPYSRGYAVGSVDGRVAVDFPNTSCSSEIK), 229-269 (LDGV…RLNE), and 272-311 (RYSNSIASLAFDHTGELLAIASSHTYQDAKEKEEAPQVFI).

This sequence belongs to the WD repeat BUB3 family. As to quaternary structure, part of the mitotic checkpoint complex (MCC).

It localises to the nucleus. It is found in the chromosome. Its subcellular location is the centromere. The protein resides in the kinetochore. The protein localises to the cytoplasm. It localises to the cytoskeleton. It is found in the phragmoplast. Its subcellular location is the spindle. Functionally, has a dual function in spindle-assembly checkpoint signaling and in promoting the establishment of correct kinetochore-microtubule (K-MT) attachments. Promotes the formation of stable end-on bipolar attachments. Necessary for kinetochore localization of BUB1. The BUB1/BUB3 complex plays a role in the inhibition of anaphase-promoting complex or cyclosome (APC/C) when spindle-assembly checkpoint is activated and inhibits the ubiquitin ligase activity of APC/C by phosphorylating its activator CDC20. In Arabidopsis thaliana (Mouse-ear cress), this protein is Mitotic checkpoint protein BUB3.3 (BUB3.3).